The chain runs to 610 residues: Elongation factor 4 (610 aa).

The 183-residue stretch at 12 to 194 (EKIRNFSIIA…QIVEKVPAPQ (183 aa)) folds into the tr-type G domain. GTP-binding positions include 24–29 (DHGKST) and 141–144 (NKID).

This sequence belongs to the TRAFAC class translation factor GTPase superfamily. Classic translation factor GTPase family. LepA subfamily.

It is found in the cell membrane. The catalysed reaction is GTP + H2O = GDP + phosphate + H(+). In terms of biological role, required for accurate and efficient protein synthesis under certain stress conditions. May act as a fidelity factor of the translation reaction, by catalyzing a one-codon backward translocation of tRNAs on improperly translocated ribosomes. Back-translocation proceeds from a post-translocation (POST) complex to a pre-translocation (PRE) complex, thus giving elongation factor G a second chance to translocate the tRNAs correctly. Binds to ribosomes in a GTP-dependent manner. This chain is Elongation factor 4, found in Streptococcus thermophilus (strain CNRZ 1066).